Reading from the N-terminus, the 357-residue chain is MQTVLALETSCDESAAAVVRHKADGSVEVLASRIASQVEEHALWGGVVPEIASRRHVEALPALVQEVLRESALSISELNAVAATVAPGLAGALMVASVTGRTLAALHQVPFLGIHHLEGHLASAALGEQAPAPPYLVLLVSGGHTELIRVGLNGEMERLGRSHDDAAGEAFDKVARLLGLGYPGGPAIQAIAVSGNAKRFSLPKGRISLRGGGFHPYDFSFSGLKTAMLRTVESCQSSGGDLPLADLAASFEQVVADVLVERAIRCALDHNLTQLVMVGGVAANQRLRLLMAKQGKQHGVAISIAPLAYCTDNAAMIGAAALNRLSRGVLSSSDETGVAARWPLERADALYDASPAF.

Positions 116 and 120 each coordinate Fe cation. Substrate contacts are provided by residues 139–143 (LVSGG), aspartate 172, glycine 185, and asparagine 284. Aspartate 312 lines the Fe cation pocket.

The protein belongs to the KAE1 / TsaD family. Requires Fe(2+) as cofactor.

The protein localises to the cytoplasm. It catalyses the reaction L-threonylcarbamoyladenylate + adenosine(37) in tRNA = N(6)-L-threonylcarbamoyladenosine(37) in tRNA + AMP + H(+). Functionally, required for the formation of a threonylcarbamoyl group on adenosine at position 37 (t(6)A37) in tRNAs that read codons beginning with adenine. Is involved in the transfer of the threonylcarbamoyl moiety of threonylcarbamoyl-AMP (TC-AMP) to the N6 group of A37, together with TsaE and TsaB. TsaD likely plays a direct catalytic role in this reaction. The polypeptide is tRNA N6-adenosine threonylcarbamoyltransferase (Synechococcus sp. (strain CC9902)).